Reading from the N-terminus, the 122-residue chain is Large ribosomal subunit protein uL14 (122 aa).

It belongs to the universal ribosomal protein uL14 family. In terms of assembly, part of the 50S ribosomal subunit. Forms a cluster with proteins L3 and L19. In the 70S ribosome, L14 and L19 interact and together make contacts with the 16S rRNA in bridges B5 and B8.

In terms of biological role, binds to 23S rRNA. Forms part of two intersubunit bridges in the 70S ribosome. The sequence is that of Large ribosomal subunit protein uL14 from Shewanella loihica (strain ATCC BAA-1088 / PV-4).